The following is a 246-amino-acid chain: Alpha-amylase inhibitor 1 (246 aa).

An N-terminal signal peptide occupies residues 1–23 (MIMASSKLLSLALFLALLSHANS). N-linked (GlcNAc...) asparagine glycans are attached at residues Asn35, Asn88, and Asn163. Residues 240–246 (IVLNKIL) constitute a propeptide that is removed on maturation.

Belongs to the leguminous lectin family. As to quaternary structure, heterodimer of chain 1 and chain 2. Proteolytic processing yields active form.

In terms of biological role, lectin and alpha-amylase inhibitor. Acts as a defensive protein against insects. This is Alpha-amylase inhibitor 1 (LLP) from Phaseolus vulgaris (Kidney bean).